Consider the following 326-residue polypeptide: MNAIISPDYYYVLTVAGQSNAMAYGEGLPLPDREDAPHPRIKQLARFAHTHPGGPPCHFNDIIPLTHCPHDVQDMQGYHHPLATNHQTQYGTVGQALHIARKLLPFIPDNAGILIVPCCRGGSAFTAGSEGTYSERHGASHDACRWGTDTPLYQDLVSRTRAALAKNPQNKFLGACWMQGEFDLMTSDYASHPQHFNHMVEAFRRDLKQYHSQLNNITDAPWFCGDTTWYWKENFPHSYEAIYGNYQNNVLANIIFVDFQQQGERGLTNAPDEDPDDLSTGYYGSAYRSPENWTTALRSSHFSTAARRGIISDRFVEAILQFWRER.

Positions 1–21 are cleaved as a signal peptide; the sequence is MNAIISPDYYYVLTVAGQSNA.

The protein resides in the periplasm. Functionally, probably catalyzes the hydrolysis of the 9-O-acetyl group of 9-O-acetyl-N-acetylneuraminate (Neu5,9Ac2). Is required for growth of E.coli on Neu5,9Ac2, an alternative sialic acid commonly found in mammalian host mucosal sites, in particular in the human intestine. The polypeptide is Probable 9-O-acetyl-N-acetylneuraminic acid deacetylase (nanS) (Escherichia coli (strain K12)).